A 268-amino-acid chain; its full sequence is Tryptophan synthase alpha chain (268 aa).

Catalysis depends on proton acceptor residues E49 and D60.

It belongs to the TrpA family. As to quaternary structure, tetramer of two alpha and two beta chains.

The catalysed reaction is (1S,2R)-1-C-(indol-3-yl)glycerol 3-phosphate + L-serine = D-glyceraldehyde 3-phosphate + L-tryptophan + H2O. The protein operates within amino-acid biosynthesis; L-tryptophan biosynthesis; L-tryptophan from chorismate: step 5/5. The alpha subunit is responsible for the aldol cleavage of indoleglycerol phosphate to indole and glyceraldehyde 3-phosphate. This Escherichia coli (strain SE11) protein is Tryptophan synthase alpha chain.